Reading from the N-terminus, the 595-residue chain is Elongation factor 4 (595 aa).

The tr-type G domain maps to 2–184 (SHIRNFSIIA…RLVATIPPPT (183 aa)). Residues 14–19 (DHGKST) and 131–134 (NKMD) each bind GTP.

It belongs to the TRAFAC class translation factor GTPase superfamily. Classic translation factor GTPase family. LepA subfamily.

The protein resides in the cell inner membrane. It catalyses the reaction GTP + H2O = GDP + phosphate + H(+). Functionally, required for accurate and efficient protein synthesis under certain stress conditions. May act as a fidelity factor of the translation reaction, by catalyzing a one-codon backward translocation of tRNAs on improperly translocated ribosomes. Back-translocation proceeds from a post-translocation (POST) complex to a pre-translocation (PRE) complex, thus giving elongation factor G a second chance to translocate the tRNAs correctly. Binds to ribosomes in a GTP-dependent manner. The sequence is that of Elongation factor 4 from Pseudomonas syringae pv. tomato (strain ATCC BAA-871 / DC3000).